Reading from the N-terminus, the 433-residue chain is MKVWLASLFLCALVVKNSEGGSVLGAPDESNCGCQNGGVCVSYKYFSRIRRCSCPRKFQGEHCEIDASKTCYHGNGDSYRGKANTDTKGRPCLAWNAPAVLQKPYNAHRPDAISLGLGKHNYCRNPDNQKRPWCYVQIGLRQFVQECMVHDCSLSKKPSSSVDQQGFQCGQKALRPRFKIVGGEFTEVENQPWFAAIYQKNKGGSPPSFKCGGSLISPCWVASAAHCFIQLPKKENYVVYLGQSKESSYNPGEMKFEVEQLILHEYYREDSLAYHNDIALLKIRTSTGQCAQPSRSIQTICLPPRFTDAPFGSDCEITGFGKESESDYLYPKNLKMSVVKLVSHEQCMQPHYYGSEINYKMLCAADPEWKTDSCKGDSGGPLICNIEGRPTLSGIVSWGRGCAEKNKPGVYTRVSHFLDWIQSHIGEEKGLAF.

The signal sequence occupies residues Met-1–Gly-20. Positions Asp-28 to Glu-64 constitute an EGF-like domain. Cystine bridges form between Cys-32-Cys-40, Cys-34-Cys-52, Cys-54-Cys-63, Cys-71-Cys-152, Cys-92-Cys-134, and Cys-123-Cys-147. The interval Gln-35 to Phe-58 is binds urokinase plasminogen activator surface receptor. In terms of domain architecture, Kringle spans Cys-71–Cys-152. Residues Ser-153–Lys-179 form a connecting peptide region. Phosphoserine is present on Ser-159. Intrachain disulfides connect Cys-169-Cys-301, Cys-211-Cys-227, Cys-219-Cys-290, Cys-315-Cys-384, Cys-347-Cys-363, and Cys-374-Cys-402. A Peptidase S1 domain is found at Ile-180–Gly-426. Active-site charge relay system residues include His-226 and Asp-277. The active-site Charge relay system is Ser-378.

Belongs to the peptidase S1 family. As to quaternary structure, found in high and low molecular mass forms. Each consists of two chains, A and B. The high molecular mass form contains a long chain A which is cleaved to yield a short chain A. Forms heterodimer with SERPINA5. Binds LRP1B; binding is followed by internalization and degradation. Interacts with MRC2. Interacts with PLAUR. In complex with SERPINE1, interacts with PLAUR/uPAR. Interacts with SORL1 and LRP1, either alone or in complex with SERPINE1; these interactions are abolished in the presence of LRPAP1/RAP. The ternary complex composed of PLAUR-PLAU-PAI1 also interacts with SORLA. Produced as an inactive single-chain protein (pro-uPA or sc-uPA), is processed into the active disulfide-linked two-chain form of PLAU/uPA by a proteolytic event mediated, at least, by TMPRSS4.

The protein localises to the secreted. The catalysed reaction is Specific cleavage of Arg-|-Val bond in plasminogen to form plasmin.. Inhibited by SERPINA5. Inhibited by SERPINE1. Functionally, specifically cleaves the zymogen plasminogen to form the active enzyme plasmin. This is Urokinase-type plasminogen activator (Plau) from Mus musculus (Mouse).